Reading from the N-terminus, the 95-residue chain is MELVLVFLCSLLAPMVLASAAEKEKEMDPFHYDYQTLRIGGLVFAVVLFSVGILLILSRRCKCSFNQKPRAPGDEEAQVENLITANATEPQKAEN.

The N-terminal stretch at 1–18 is a signal peptide; that stretch reads MELVLVFLCSLLAPMVLA. The Extracellular portion of the chain corresponds to 19–35; it reads SAAEKEKEMDPFHYDYQ. Residues 36–57 form a helical membrane-spanning segment; the sequence is TLRIGGLVFAVVLFSVGILLIL. Topologically, residues 58–95 are cytoplasmic; that stretch reads SRRCKCSFNQKPRAPGDEEAQVENLITANATEPQKAEN. Residues 69-95 form a disordered region; sequence PRAPGDEEAQVENLITANATEPQKAEN.

It belongs to the FXYD family. As to quaternary structure, regulatory subunit of the sodium/potassium-transporting ATPase which is composed of a catalytic alpha subunit, a non-catalytic beta subunit and an additional regulatory subunit. The regulatory subunit, a member of the FXYD protein family, modulates the enzymatic activity in a tissue- and isoform-specific way by changing affinities of the Na+/K+-ATPase toward Na(+), K(+) or ATP.

It is found in the cell membrane. Associates with and regulates the activity of the sodium/potassium-transporting ATPase (NKA) which catalyzes the hydrolysis of ATP coupled with the exchange of Na(+) and K(+) ions across the plasma membrane. Reduces the apparent affinity for intracellular Na(+) with no change in the apparent affinity for extracellular K(+). In addition to modulating NKA kinetics, may also function as a regulator of NKA localization to the plasma membrane. This is FXYD domain-containing ion transport regulator 6 from Homo sapiens (Human).